Reading from the N-terminus, the 213-residue chain is MOB kinase activator-like 1 homolog A (213 aa).

C77, C82, H159, and H164 together coordinate Zn(2+).

Belongs to the MOB1/phocein family.

The sequence is that of MOB kinase activator-like 1 homolog A (mobA) from Dictyostelium discoideum (Social amoeba).